We begin with the raw amino-acid sequence, 519 residues long: Alternative NAD(P)H-ubiquinone oxidoreductase C1, chloroplastic/mitochondrial (519 aa).

The N-terminal 52 residues, 1 to 52 (MAVLSSVSSLIPFSYGATRLTSKASLASRTSGFNLSSRWNSTRNSPMLYLSR), are a transit peptide targeting the chloroplast and mitochondrion. Residue 82-118 (RVCILGGGFGGLYTALRLESLVWPEDKKPQVVLVDQS) participates in FAD binding. 246 to 282 (IKVAVVGCGYAGVELAATISERLQDRGIVQSINVSKN) serves as a coordination point for NAD(+).

Belongs to the NADH dehydrogenase family. FAD serves as cofactor. In terms of tissue distribution, flowers, roots, leaves and stems.

It localises to the mitochondrion. The protein localises to the mitochondrion inner membrane. It is found in the plastid. The protein resides in the chloroplast. Its subcellular location is the plastoglobule. It catalyses the reaction a quinone + NADH + H(+) = a quinol + NAD(+). It carries out the reaction a ubiquinone + NADH + H(+) = a ubiquinol + NAD(+). The enzyme catalyses demethylphylloquinone + NADPH + H(+) = demethylphylloquinol + NADP(+). Its activity is regulated as follows. Inhibited by dicumarol. In terms of biological role, bifunctional oxidoreductase ables to act both on prenyl naphthoquinones and on prenyl benzoquinones. May serve a respiratory function. Involved in an electron flow toward the plastoglobule plastoquinone pool. Required for plastochromanol-8 accumulation and for phylloquinone (vitamin K1) production. Probably not directly involved in cyclic or chlororespiratory electron flows under standard growth conditions, but participates in the redox metabolism of plastoquinone-9 and the tocophrol recycling-intermediate alpha-tocopherol quinone. Catalyzes the penultimate step in the biosynthesis of vitamin K1. The sequence is that of Alternative NAD(P)H-ubiquinone oxidoreductase C1, chloroplastic/mitochondrial from Arabidopsis thaliana (Mouse-ear cress).